The following is a 101-amino-acid chain: Aspartyl/glutamyl-tRNA(Asn/Gln) amidotransferase subunit C (101 aa).

This sequence belongs to the GatC family. As to quaternary structure, heterotrimer of A, B and C subunits.

It catalyses the reaction L-glutamyl-tRNA(Gln) + L-glutamine + ATP + H2O = L-glutaminyl-tRNA(Gln) + L-glutamate + ADP + phosphate + H(+). It carries out the reaction L-aspartyl-tRNA(Asn) + L-glutamine + ATP + H2O = L-asparaginyl-tRNA(Asn) + L-glutamate + ADP + phosphate + 2 H(+). Its function is as follows. Allows the formation of correctly charged Asn-tRNA(Asn) or Gln-tRNA(Gln) through the transamidation of misacylated Asp-tRNA(Asn) or Glu-tRNA(Gln) in organisms which lack either or both of asparaginyl-tRNA or glutaminyl-tRNA synthetases. The reaction takes place in the presence of glutamine and ATP through an activated phospho-Asp-tRNA(Asn) or phospho-Glu-tRNA(Gln). In Lactococcus lactis subsp. cremoris (strain SK11), this protein is Aspartyl/glutamyl-tRNA(Asn/Gln) amidotransferase subunit C.